The sequence spans 473 residues: Lysophospholipid acyltransferase 5 (473 aa).

4 helical membrane passes run 20–40 (LLIS…FFYN), 43–63 (AQHQ…FNCG), 66–86 (VIHP…MAGT), and 88–108 (ASIY…YWFH). Residues N315 and H351 contribute to the active site. 3 helical membrane passes run 341–361 (VITL…FLLF), 396–416 (FIWI…FLMF), and 431–451 (LYFI…MVLL). The Di-lysine motif signature appears at 470–473 (KKEL).

It belongs to the membrane-bound acyltransferase family.

The protein resides in the endoplasmic reticulum membrane. The catalysed reaction is a 1-acyl-sn-glycero-3-phosphocholine + an acyl-CoA = a 1,2-diacyl-sn-glycero-3-phosphocholine + CoA. It catalyses the reaction a 1-acyl-sn-glycero-3-phospho-L-serine + an acyl-CoA = a 1,2-diacyl-sn-glycero-3-phospho-L-serine + CoA. The enzyme catalyses a 1-acyl-sn-glycero-3-phosphoethanolamine + an acyl-CoA = a 1,2-diacyl-sn-glycero-3-phosphoethanolamine + CoA. It functions in the pathway lipid metabolism; phospholipid metabolism. In terms of biological role, probable acyltransferase which may mediate the conversion of lysophosphatidylcholine (1-acyl-sn-glycero-3-phosphocholine or LPC) into phosphatidylcholine (1,2-diacyl-sn-glycero-3-phosphocholine or PC) (LPCAT activity). May also catalyze the conversion of lysophosphatidylethanolamine (1-acyl-2-hydroxy-sn-glycero-3-phosphoethanolamine or LPE) into phosphatidylethanolamine (1,2-diacyl-sn-glycero-3-phosphoethanolamine or PE) (LPEAT activity), as well as the conversion of lysophosphatidylserine (1-acyl-2-hydroxy-sn-glycero-3-phospho-L-serine or LPS) into phosphatidylserine (1,2-diacyl-sn-glycero-3-phospho-L-serine or PS) (LPSAT activity). Required for incorporation of arachidonic acid into PC, PE, and PS. This chain is Lysophospholipid acyltransferase 5 (mboa-6), found in Caenorhabditis elegans.